The primary structure comprises 420 residues: Glycogen synthase kinase-3 beta (420 aa).

Residues 1 to 22 show a composition bias toward polar residues; sequence MSGRPRTTSFAESCKPVQQPSA. The tract at residues 1-53 is disordered; the sequence is MSGRPRTTSFAESCKPVQQPSAFGSMKVSRDKDGSKVTTVVATPGQGPDRPQE. Ser-9 bears the Phosphoserine; by PKB/AKT1, RPS6KA3 and SGK3 mark. Residue Cys-14 is the site of S-palmitoyl cysteine attachment. A Protein kinase domain is found at 56–340; that stretch reads YTDTKVIGNG…PLEACAHSFF (285 aa). ATP contacts are provided by residues 62–70 and Lys-85; that span reads IGNGSFGVV. The active-site Proton acceptor is Asp-181. Tyr-216 carries the phosphotyrosine modification. Positions 385–420 are disordered; it reads QAAASPPANATAASDTNAGDRGQTNNAASASASNST. Composition is skewed to low complexity over residues 386-401 and 409-420; these read AAAS…SDTN and NNAASASASNST. Ser-389 carries the phosphoserine modification.

This sequence belongs to the protein kinase superfamily. CMGC Ser/Thr protein kinase family. GSK-3 subfamily. As to quaternary structure, monomer. Interacts with DAB2IP (via C2 domain); the interaction stimulates GSK3B kinase activation. Interacts (via C2 domain) with PPP2CA. Interacts with ARRB2, AXIN1, CABYR, DISC1, MMP2, MUC1, NIN, PRUNE1 and ZBED3. Interacts with AXIN1; the interaction mediates hyperphosphorylation of CTNNB1 leading to its ubiquitination and destruction. Interacts with and phosphorylates SNAI1. Interacts with DNM1L (via a C-terminal domain). Found in a complex composed of MACF1, APC, AXIN1, CTNNB1 and GSK3B. Interacts with SGK3. Interacts with the CLOCK-BMAL1 heterodimer. Interacts with the BMAL1. Interacts with CTNND2. The complex composed, at least, of APC, CTNNB1 and GSK3B interacts with JPT1; the interaction requires the inactive form of GSK3B (phosphorylated at 'Ser-9'). Forms a complex composed of PRKAR2A or PRKAR2B, GSK3B and GSKIP through GSKIP interaction; facilitates PKA-induced phosphorylation and regulates GSK3B activity. Interacts with GSKIP. Interacts with GID8. Interacts with PIWIL2. Interacts with LMBR1L. Interacts with DDX3X. Interacts with BIRC2. Interacts with TNFRSF10B; TNFRSF10B stimulation inhibits GSK3B kinase activity. Found in a complex with SLC39A6, SLC39A10 and with GSK3B that controls NCAM1 phosphorylation. Interacts with PKP3 (via ARM repeats); the interaction may be involved in PKP3 protein degradation. In terms of processing, phosphorylated by AKT1 and ILK1. Upon insulin-mediated signaling, the activated PKB/AKT1 and RPS6KA3 protein kinases phosphorylate and deactivate GSK3B, resulting in the dephosphorylation and activation of GYS1. Activated by phosphorylation at Tyr-216. Inactivated by phosphorylation at Ser-9. Phosphorylated in a circadian manner in the hippocampus. Post-translationally, mono-ADP-ribosylation by PARP10 negatively regulates kinase activity. Palmitoylated. Palmitoylation by ZDHHC4 prevents AKT1-mediated phosphorylation.

The protein resides in the cytoplasm. It localises to the nucleus. It is found in the membrane. The protein localises to the cell membrane. It carries out the reaction L-seryl-[tau protein] + ATP = O-phospho-L-seryl-[tau protein] + ADP + H(+). It catalyses the reaction L-threonyl-[tau protein] + ATP = O-phospho-L-threonyl-[tau protein] + ADP + H(+). The catalysed reaction is L-seryl-[protein] + ATP = O-phospho-L-seryl-[protein] + ADP + H(+). The enzyme catalyses L-threonyl-[protein] + ATP = O-phospho-L-threonyl-[protein] + ADP + H(+). Its activity is regulated as follows. Activated by phosphorylation at Tyr-216. In response to insulin, inhibited by phosphorylation at Ser-9 by PKB/AKT1; phosphorylation at this site causes a conformational change, preventing access of substrates to the active site. Inhibited by IL22 treatment which also triggers phosphorylation at Ser-9, promoting inactivation. Inhibited by lithium. In terms of biological role, constitutively active protein kinase that acts as a negative regulator in the hormonal control of glucose homeostasis, Wnt signaling and regulation of transcription factors and microtubules, by phosphorylating and inactivating glycogen synthase (GYS1 or GYS2), EIF2B, CTNNB1/beta-catenin, APC, AXIN1, DPYSL2/CRMP2, JUN, NFATC1/NFATC, MAPT/TAU and MACF1. Requires primed phosphorylation of the majority of its substrates. In skeletal muscle, contributes to insulin regulation of glycogen synthesis by phosphorylating and inhibiting GYS1 activity and hence glycogen synthesis. May also mediate the development of insulin resistance by regulating activation of transcription factors. Regulates protein synthesis by controlling the activity of initiation factor 2B (EIF2BE/EIF2B5) in the same manner as glycogen synthase. In Wnt signaling, GSK3B forms a multimeric complex with APC, AXIN1 and CTNNB1/beta-catenin and phosphorylates the N-terminus of CTNNB1 leading to its degradation mediated by ubiquitin/proteasomes. Phosphorylates JUN at sites proximal to its DNA-binding domain, thereby reducing its affinity for DNA. Phosphorylates NFATC1/NFATC on conserved serine residues promoting NFATC1/NFATC nuclear export, shutting off NFATC1/NFATC gene regulation, and thereby opposing the action of calcineurin. Phosphorylates MAPT/TAU on 'Thr-548', decreasing significantly MAPT/TAU ability to bind and stabilize microtubules. MAPT/TAU is the principal component of neurofibrillary tangles in Alzheimer disease. Plays an important role in ERBB2-dependent stabilization of microtubules at the cell cortex. Phosphorylates MACF1, inhibiting its binding to microtubules which is critical for its role in bulge stem cell migration and skin wound repair. Probably regulates NF-kappa-B (NFKB1) at the transcriptional level and is required for the NF-kappa-B-mediated anti-apoptotic response to TNF-alpha (TNF/TNFA). Negatively regulates replication in pancreatic beta-cells, resulting in apoptosis, loss of beta-cells and diabetes. Through phosphorylation of the anti-apoptotic protein MCL1, may control cell apoptosis in response to growth factors deprivation. Phosphorylates MUC1 in breast cancer cells, decreasing the interaction of MUC1 with CTNNB1/beta-catenin. Is necessary for the establishment of neuronal polarity and axon outgrowth. Phosphorylates MARK2, leading to inhibition of its activity. Phosphorylates SIK1 at 'Thr-182', leading to sustainment of its activity. Phosphorylates ZC3HAV1 which enhances its antiviral activity. Phosphorylates SNAI1, leading to its ubiquitination and proteasomal degradation. Phosphorylates SFPQ at 'Thr-687' upon T-cell activation. Phosphorylates NR1D1 st 'Ser-55' and 'Ser-59' and stabilizes it by protecting it from proteasomal degradation. Regulates the circadian clock via phosphorylation of the major clock components including BMAL1, CLOCK and PER2. Phosphorylates CLOCK AT 'Ser-427' and targets it for proteasomal degradation. Phosphorylates BMAL1 at 'Ser-17' and 'Ser-21' and primes it for ubiquitination and proteasomal degradation. Phosphorylates FBXL2 at 'Thr-404' and primes it for ubiquitination by the SCF(FBXO3) complex and proteasomal degradation. Phosphorylates OGT at 'Ser-3' or 'Ser-4' which positively regulates its activity. Phosphorylates MYCN in neuroblastoma cells which may promote its degradation. Regulates the circadian rhythmicity of hippocampal long-term potentiation and BMAL1 and PER2 expression. Acts as a regulator of autophagy by mediating phosphorylation of KAT5/TIP60 under starvation conditions, activating KAT5/TIP60 acetyltransferase activity and promoting acetylation of key autophagy regulators, such as ULK1 and RUBCNL/Pacer. Negatively regulates extrinsic apoptotic signaling pathway via death domain receptors. Promotes the formation of an anti-apoptotic complex, made of DDX3X, BRIC2 and GSK3B, at death receptors, including TNFRSF10B. The anti-apoptotic function is most effective with weak apoptotic signals and can be overcome by stronger stimulation. Phosphorylates E2F1, promoting the interaction between E2F1 and USP11, stabilizing E2F1 and promoting its activity. Phosphorylates mTORC2 complex component RICTOR at 'Ser-1235' in response to endoplasmic stress, inhibiting mTORC2. Phosphorylates FXR1, promoting FXR1 ubiquitination by the SCF(FBXO4) complex and FXR1 degradation by the proteasome. Phosphorylates interleukin-22 receptor subunit IL22RA1, preventing its proteasomal degradation. The chain is Glycogen synthase kinase-3 beta from Rattus norvegicus (Rat).